Here is a 203-residue protein sequence, read N- to C-terminus: Akirin-2 (203 aa).

A phosphoserine mark is found at serine 18 and serine 21. The Nuclear localization signal signature appears at 22–27; sequence PKRRRC. Serine 57 carries the phosphoserine modification. The tract at residues 115–137 is disordered; that stretch reads PHAFLLSGPASPGTPSGTSSPLK. The span at 119 to 135 shows a compositional bias: low complexity; the sequence is LLSGPASPGTPSGTSSP. An SYVS motif motif is present at residues 200–203; it reads SYVS.

The protein belongs to the akirin family. Homodimer. Interacts with IPO9; the interaction is direct. Associates with 20S and 26S proteasomes. Interacts with SMARCD1; promoting SWI/SNF complex recruitment. Interacts with NFKBIZ. Interacts with YWHAB. Post-translationally, polyubiquitinated. Polyubiquitination is dependent of UBR5 that extends pre-ubiquitinated AKIRIN2.

Its subcellular location is the nucleus. The protein resides in the cytoplasm. The protein localises to the membrane. In terms of biological role, molecular adapter that acts as a bridge between a variety of multiprotein complexes, and which is involved in embryonic development, immunity, myogenesis and brain development. Plays a key role in nuclear protein degradation by promoting import of proteasomes into the nucleus: directly binds to fully assembled 20S proteasomes at one end and to nuclear import receptor IPO9 at the other end, bridging them together and mediating the import of pre-assembled proteasome complexes through the nuclear pore. Involved in innate immunity by regulating the production of interleukin-6 (IL6) downstream of Toll-like receptor (TLR): acts by bridging the NF-kappa-B inhibitor NFKBIZ and the SWI/SNF complex, leading to promote induction of IL6. Also involved in adaptive immunity by promoting B-cell activation. Involved in brain development: required for the survival and proliferation of cerebral cortical progenitor cells. Involved in myogenesis: required for skeletal muscle formation and skeletal development, possibly by regulating expression of muscle differentiation factors. The sequence is that of Akirin-2 from Bos taurus (Bovine).